Here is a 514-residue protein sequence, read N- to C-terminus: Ribonuclease Y (514 aa).

The chain crosses the membrane as a helical span at residues 3-23 (VLWMVLGLAIGIAVGAAAGYI). The KH domain occupies 203–266 (TVKAVELPSD…EVARIAMERL (64 aa)). The region spanning 330–423 (VLAHSVEVAN…VATADAVSAA (94 aa)) is the HD domain.

Belongs to the RNase Y family.

It localises to the cell membrane. Functionally, endoribonuclease that initiates mRNA decay. This is Ribonuclease Y from Rubrobacter xylanophilus (strain DSM 9941 / JCM 11954 / NBRC 16129 / PRD-1).